The chain runs to 886 residues: Putative leucine-rich repeat receptor-like serine/threonine-protein kinase At2g14440 (886 aa).

The first 23 residues, 1–23 (METRSKLMLLACATFSIISLVKS), serve as a signal peptide directing secretion. At 24–528 (QNQQGFISLY…KHQPKSWLVA (505 aa)) the chain is on the extracellular side. 10 N-linked (GlcNAc...) asparagine glycosylation sites follow: Asn-49, Asn-69, Asn-232, Asn-236, Asn-259, Asn-292, Asn-434, Asn-447, Asn-458, and Asn-471. LRR repeat units lie at residues 413 to 436 (RIIS…QNLT), 437 to 460 (MLRE…QNLT), 461 to 483 (MLRE…LATI), and 485 to 507 (PLLV…LQDR). The chain crosses the membrane as a helical span at residues 529–549 (IVASISCVAVTIIVLVLIFIF). Residues 550–886 (RRRKSSTRKV…TFISDIPSAR (337 aa)) lie on the Cytoplasmic side of the membrane. Residues 581 to 850 (NNFEVVLGKG…NMTRVAHELN (270 aa)) form the Protein kinase domain. ATP is bound by residues 587–595 (LGKGGFGVV) and Lys-608. Tyr-653 carries the phosphotyrosine modification. The active-site Proton acceptor is Asp-705. Ser-739 bears the Phosphoserine mark. A phosphothreonine mark is found at Thr-740 and Thr-745. Residue Tyr-753 is modified to Phosphotyrosine. The interval 863–886 (SQDQNSSKSSGHTVTFISDIPSAR) is disordered. Over residues 865–878 (DQNSSKSSGHTVTF) the composition is skewed to polar residues.

This sequence belongs to the protein kinase superfamily. Ser/Thr protein kinase family.

It is found in the cell membrane. It carries out the reaction L-seryl-[protein] + ATP = O-phospho-L-seryl-[protein] + ADP + H(+). The catalysed reaction is L-threonyl-[protein] + ATP = O-phospho-L-threonyl-[protein] + ADP + H(+). The sequence is that of Putative leucine-rich repeat receptor-like serine/threonine-protein kinase At2g14440 from Arabidopsis thaliana (Mouse-ear cress).